Here is a 478-residue protein sequence, read N- to C-terminus: SPbeta prophage-derived uncharacterized protein YonD (478 aa).

A coiled-coil region spans residues 326–419 (IQSQLNQKDE…KFSTEEVQNL (94 aa)).

This chain is SPbeta prophage-derived uncharacterized protein YonD (yonD), found in Bacillus subtilis (strain 168).